The chain runs to 394 residues: tRNA-specific 2-thiouridylase MnmA (394 aa).

ATP-binding positions include 13-20 (GLSGGVDS) and methionine 39. The interval 99 to 101 (NPD) is interaction with target base in tRNA. Cysteine 104 serves as the catalytic Nucleophile. Cysteine 104 and cysteine 202 are joined by a disulfide. ATP is bound at residue glycine 128. The interval 152–154 (KDQ) is interaction with tRNA. The active-site Cysteine persulfide intermediate is cysteine 202. Positions 329 to 330 (RY) are interaction with tRNA.

This sequence belongs to the MnmA/TRMU family.

It localises to the cytoplasm. The enzyme catalyses S-sulfanyl-L-cysteinyl-[protein] + uridine(34) in tRNA + AH2 + ATP = 2-thiouridine(34) in tRNA + L-cysteinyl-[protein] + A + AMP + diphosphate + H(+). In terms of biological role, catalyzes the 2-thiolation of uridine at the wobble position (U34) of tRNA, leading to the formation of s(2)U34. The chain is tRNA-specific 2-thiouridylase MnmA from Polaromonas naphthalenivorans (strain CJ2).